The primary structure comprises 62 residues: Conotoxin TxIC (62 aa).

The first 22 residues, 1-22, serve as a signal peptide directing secretion; it reads MHCLPIFVILLLLTASGPSVDA. Residues 23 to 47 constitute a propeptide that is removed on maturation; that stretch reads QLKTKDDVPLSSFRDHAKSTLRRLQ. 2 disulfides stabilise this stretch: Cys52-Cys58 and Cys53-Cys61. A 4-hydroxyproline modification is found at Pro60. Cys61 is modified (cysteine amide).

Belongs to the conotoxin A superfamily. In terms of tissue distribution, expressed by the venom duct.

It localises to the secreted. The sequence is that of Conotoxin TxIC from Conus textile (Cloth-of-gold cone).